A 570-amino-acid chain; its full sequence is Molecular chaperone MKKS (570 aa).

192–199 (GHIILGKS) contributes to the ATP binding site. Residues 198 to 370 (KSLIVPLKGQ…FHLIPNEATI (173 aa)) are substrate-binding apical domain.

The protein belongs to the TCP-1 chaperonin family. Component of a complex composed at least of MKKS, BBS10, BBS12, TCP1, CCT2, CCT3, CCT4, CCT5 and CCT8. Interacts with STUB1. Interacts with BBS2 (via coiled coil domain). Interacts with CCDC28B. Interacts with BBS12. Interacts with SMARCC1, a component of the SWI/SNF complexes; the interaction takes place predominantly in the cytoplasm and may modulate SMARCC1 location. Interacts with DLEC1. Widely expressed in adult and fetal tissues.

It localises to the cytoplasm. The protein resides in the cytoskeleton. The protein localises to the microtubule organizing center. Its subcellular location is the centrosome. It is found in the cytosol. It localises to the nucleus. Probable molecular chaperone that assists the folding of proteins upon ATP hydrolysis. Plays a role in the assembly of BBSome, a complex involved in ciliogenesis regulating transports vesicles to the cilia. May play a role in protein processing in limb, cardiac and reproductive system development. May play a role in cytokinesis. This is Molecular chaperone MKKS from Homo sapiens (Human).